We begin with the raw amino-acid sequence, 205 residues long: Large ribosomal subunit protein uL4 (205 aa).

The tract at residues 44-77 (KRQGTSKVKNRSAVRGGGKKPWRQKGTGRARQGS) is disordered. Over residues 51–71 (VKNRSAVRGGGKKPWRQKGTG) the composition is skewed to basic residues.

The protein belongs to the universal ribosomal protein uL4 family. In terms of assembly, part of the 50S ribosomal subunit.

One of the primary rRNA binding proteins, this protein initially binds near the 5'-end of the 23S rRNA. It is important during the early stages of 50S assembly. It makes multiple contacts with different domains of the 23S rRNA in the assembled 50S subunit and ribosome. In terms of biological role, forms part of the polypeptide exit tunnel. The chain is Large ribosomal subunit protein uL4 from Lactobacillus delbrueckii subsp. bulgaricus (strain ATCC 11842 / DSM 20081 / BCRC 10696 / JCM 1002 / NBRC 13953 / NCIMB 11778 / NCTC 12712 / WDCM 00102 / Lb 14).